We begin with the raw amino-acid sequence, 397 residues long: Succinate--CoA ligase [ADP-forming] subunit beta (397 aa).

The ATP-grasp domain occupies 9–254 (KALLREFGVP…ESEEDAKEIE (246 aa)). Residues Lys46, 53–55 (GRG), Glu109, Ser112, and Glu117 contribute to the ATP site. Asn209 and Asp223 together coordinate Mg(2+). Substrate is bound by residues Asn274 and 331 to 333 (GIM).

Belongs to the succinate/malate CoA ligase beta subunit family. As to quaternary structure, heterotetramer of two alpha and two beta subunits. It depends on Mg(2+) as a cofactor.

It catalyses the reaction succinate + ATP + CoA = succinyl-CoA + ADP + phosphate. The catalysed reaction is GTP + succinate + CoA = succinyl-CoA + GDP + phosphate. It functions in the pathway carbohydrate metabolism; tricarboxylic acid cycle; succinate from succinyl-CoA (ligase route): step 1/1. Functionally, succinyl-CoA synthetase functions in the citric acid cycle (TCA), coupling the hydrolysis of succinyl-CoA to the synthesis of either ATP or GTP and thus represents the only step of substrate-level phosphorylation in the TCA. The beta subunit provides nucleotide specificity of the enzyme and binds the substrate succinate, while the binding sites for coenzyme A and phosphate are found in the alpha subunit. The sequence is that of Succinate--CoA ligase [ADP-forming] subunit beta from Nitrobacter hamburgensis (strain DSM 10229 / NCIMB 13809 / X14).